Consider the following 187-residue polypeptide: T-cell receptor-associated transmembrane adapter 1 (187 aa).

The Extracellular portion of the chain corresponds to 1-7 (MSGSSGC). A helical; Signal-anchor for type III membrane protein membrane pass occupies residues 8 to 28 (PFFLWGLLAFLGLALVISLIF). The Cytoplasmic segment spans residues 29–187 (NISHYVEKQR…LIRAKREPVI (159 aa)). A Phosphoserine modification is found at Ser46. At Tyr80 the chain carries Phosphotyrosine. Residues 80-83 (YEQM) form an interaction with PIK3R1 region. The interval 117–138 (SVKGKRRRPRKQNTNVSDRGKD) is disordered.

Homodimer; disulfide-linked. Interacts with CD3Z. When phosphorylated, interacts with PIK3R1. Phosphorylated on tyrosines upon TCR activation. As to expression, present in T-cells (at protein level).

The protein resides in the cell membrane. Its function is as follows. Stabilizes the TCR (T-cell antigen receptor)/CD3 complex at the surface of T-cells. The protein is T-cell receptor-associated transmembrane adapter 1 (Trat1) of Mus musculus (Mouse).